The primary structure comprises 558 residues: Glucose-6-phosphate isomerase (558 aa).

Residue Glu362 is the Proton donor of the active site. Catalysis depends on residues His393 and Lys523.

The protein belongs to the GPI family.

It is found in the cytoplasm. It catalyses the reaction alpha-D-glucose 6-phosphate = beta-D-fructose 6-phosphate. It participates in carbohydrate degradation; glycolysis; D-glyceraldehyde 3-phosphate and glycerone phosphate from D-glucose: step 2/4. This chain is Glucose-6-phosphate isomerase (Pgi), found in Drosophila yakuba (Fruit fly).